The chain runs to 165 residues: Calcium-binding protein H (165 aa).

EF-hand domains lie at 7–42, 43–78, 88–123, and 124–159; these read QIEK…MGSK, YPEK…RYQD, YFQD…IGSD, and HPKE…TIRS. Residues D20, D22, N24, E26, E31, D56, D58, E60, K62, E67, D101, N103, D105, R107, E112, D137, N139, D141, Y143, and E148 each contribute to the Ca(2+) site.

This Dictyostelium discoideum (Social amoeba) protein is Calcium-binding protein H (cbpH).